The sequence spans 271 residues: UPF0328 protein ECU09_0020 (271 aa).

Belongs to the UPF0328 family.

The protein is UPF0328 protein ECU09_0020 of Encephalitozoon cuniculi (strain GB-M1) (Microsporidian parasite).